The sequence spans 288 residues: Geranylgeranyl diphosphate synthase (288 aa).

Positions 43 and 73 each coordinate isopentenyl diphosphate. Mg(2+) contacts are provided by aspartate 80 and aspartate 86. Residue arginine 91 coordinates (2E,6E)-farnesyl diphosphate. Arginine 92 is a binding site for isopentenyl diphosphate. Residues lysine 170, threonine 171, and glutamine 205 each contribute to the (2E,6E)-farnesyl diphosphate site.

The protein belongs to the FPP/GGPP synthase family. Mg(2+) is required as a cofactor.

It catalyses the reaction isopentenyl diphosphate + (2E,6E)-farnesyl diphosphate = (2E,6E,10E)-geranylgeranyl diphosphate + diphosphate. It participates in isoprenoid biosynthesis; geranylgeranyl diphosphate biosynthesis; geranylgeranyl diphosphate from farnesyl diphosphate and isopentenyl diphosphate: step 1/1. Functionally, catalyzes the condensation of farnesyl diphosphate (FPP) and isopentenyl diphosphate (IPP) to yield geranylgeranyl diphosphate (GGPP) needed for biosynthesis of carotenoids and diterpenes. In Cereibacter sphaeroides (strain ATCC 17023 / DSM 158 / JCM 6121 / CCUG 31486 / LMG 2827 / NBRC 12203 / NCIMB 8253 / ATH 2.4.1.) (Rhodobacter sphaeroides), this protein is Geranylgeranyl diphosphate synthase (crtE).